The sequence spans 120 residues: NAD(P)H-quinone oxidoreductase subunit 3 (120 aa).

The next 3 membrane-spanning stretches (helical) occupy residues 10–30, 64–84, and 89–109; these read FLGFLLIAAAVPVLALVTNLI, MFALVFVIFDVETVFLYPWAV, and LGLLAFIEALIFIAILVIALA.

It belongs to the complex I subunit 3 family. In terms of assembly, NDH-1 can be composed of about 15 different subunits; different subcomplexes with different compositions have been identified which probably have different functions.

The protein localises to the cellular thylakoid membrane. The enzyme catalyses a plastoquinone + NADH + (n+1) H(+)(in) = a plastoquinol + NAD(+) + n H(+)(out). It carries out the reaction a plastoquinone + NADPH + (n+1) H(+)(in) = a plastoquinol + NADP(+) + n H(+)(out). Functionally, NDH-1 shuttles electrons from an unknown electron donor, via FMN and iron-sulfur (Fe-S) centers, to quinones in the respiratory and/or the photosynthetic chain. The immediate electron acceptor for the enzyme in this species is believed to be plastoquinone. Couples the redox reaction to proton translocation, and thus conserves the redox energy in a proton gradient. Cyanobacterial NDH-1 also plays a role in inorganic carbon-concentration. The sequence is that of NAD(P)H-quinone oxidoreductase subunit 3 from Prochlorococcus marinus (strain AS9601).